The following is a 365-amino-acid chain: Transcription factor TCP2 (365 aa).

Positions 42-100 (GKDRHSKVLTSKGPRDRRVRLSVSTALQFYDLQDRLGYDQPSKAVEWLIKAAEDSISEL) constitute a TCP domain. Over residues 130–150 (KSACSSNSDTSKNSSGLSLSR) the composition is skewed to low complexity. Disordered regions lie at residues 130 to 202 (KSAC…SAPS) and 220 to 245 (QTHF…HPHH). The R domain occupies 151-172 (SELRDKARERARERTAKETKER). Residues 151–176 (SELRDKARERARERTAKETKERDHNH) are compositionally biased toward basic and acidic residues. Residues 177–202 (TSFTDLLNSGSDPVNSNRQWMASAPS) show a composition bias toward polar residues.

Interacts with SPL. Interacts with CRY1. In terms of tissue distribution, expressed in cotyledons, particularly in the vascular region, in leaves, roots, buds, flowers and immature siliques.

It localises to the nucleus. Its function is as follows. Plays a pivotal role in the control of morphogenesis of shoot organs by negatively regulating the expression of boundary-specific genes such as CUC genes, probably through the induction of miRNA (e.g. miR164). Participates in ovule development. Promotes light-regulated transcription of CHS, CAB, HYH and HY5. Positively regulates photomorphogenesis (e.g. hypocotyl elongation inhibition and cotyledon opening in response to blue light). This is Transcription factor TCP2 from Arabidopsis thaliana (Mouse-ear cress).